The sequence spans 238 residues: Ribonuclease PH (238 aa).

Phosphate-binding positions include Arg-86 and 124–126 (GTR).

This sequence belongs to the RNase PH family. In terms of assembly, homohexameric ring arranged as a trimer of dimers.

It carries out the reaction tRNA(n+1) + phosphate = tRNA(n) + a ribonucleoside 5'-diphosphate. In terms of biological role, phosphorolytic 3'-5' exoribonuclease that plays an important role in tRNA 3'-end maturation. Removes nucleotide residues following the 3'-CCA terminus of tRNAs; can also add nucleotides to the ends of RNA molecules by using nucleoside diphosphates as substrates, but this may not be physiologically important. Probably plays a role in initiation of 16S rRNA degradation (leading to ribosome degradation) during starvation. The sequence is that of Ribonuclease PH from Proteus mirabilis (strain HI4320).